We begin with the raw amino-acid sequence, 512 residues long: Endoglucanase 14 (512 aa).

The first 22 residues, methionine 1–glycine 22, serve as a signal peptide directing secretion. Asparagine 76 carries an N-linked (GlcNAc...) asparagine glycan. Aspartate 103 (nucleophile) is an active-site residue. N-linked (GlcNAc...) asparagine glycosylation is found at asparagine 192 and asparagine 215. Residues histidine 433, aspartate 484, and glutamate 493 contribute to the active site.

Belongs to the glycosyl hydrolase 9 (cellulase E) family.

It is found in the secreted. It catalyses the reaction Endohydrolysis of (1-&gt;4)-beta-D-glucosidic linkages in cellulose, lichenin and cereal beta-D-glucans.. This chain is Endoglucanase 14, found in Oryza sativa subsp. japonica (Rice).